We begin with the raw amino-acid sequence, 424 residues long: UDP-N-acetylglucosamine 1-carboxyvinyltransferase (424 aa).

Residue lysine 22–asparagine 23 coordinates phosphoenolpyruvate. Residue arginine 98 participates in UDP-N-acetyl-alpha-D-glucosamine binding. Cysteine 122 acts as the Proton donor in catalysis. Cysteine 122 bears the 2-(S-cysteinyl)pyruvic acid O-phosphothioketal mark. UDP-N-acetyl-alpha-D-glucosamine contacts are provided by residues arginine 127–glutamine 131, aspartate 312, and isoleucine 334.

This sequence belongs to the EPSP synthase family. MurA subfamily.

The protein localises to the cytoplasm. The enzyme catalyses phosphoenolpyruvate + UDP-N-acetyl-alpha-D-glucosamine = UDP-N-acetyl-3-O-(1-carboxyvinyl)-alpha-D-glucosamine + phosphate. It functions in the pathway cell wall biogenesis; peptidoglycan biosynthesis. Its function is as follows. Cell wall formation. Adds enolpyruvyl to UDP-N-acetylglucosamine. This is UDP-N-acetylglucosamine 1-carboxyvinyltransferase from Xanthomonas euvesicatoria pv. vesicatoria (strain 85-10) (Xanthomonas campestris pv. vesicatoria).